Consider the following 149-residue polypeptide: Ribonuclease HI (149 aa).

The 140-residue stretch at 1 to 140 (MIIGYFDGLC…AYELVRRGKL (140 aa)) folds into the RNase H type-1 domain. Mg(2+) is bound by residues Asp-7, Glu-52, Asp-76, and Asp-125. The Mn(2+) site is built by Asp-7, Glu-52, Asp-76, and Asp-125. Cysteines 58 and 145 form a disulfide.

Monomer. Mn(2+) serves as cofactor. Requires Mg(2+) as cofactor. The cofactor is Co(2+). Ni(2+) is required as a cofactor. In terms of processing, the disulfide bond confers considerable stability to the protein.

It localises to the cytoplasm. It carries out the reaction Endonucleolytic cleavage to 5'-phosphomonoester.. Nuclease that specifically degrades the RNA of RNA-DNA hybrids. Endonucleolytically removes RNA primers from the Okazaki fragments of lagging strand synthesis on its own. In the presence of Mn(2+) or Co(2+) can also cleave an RNA-RNA hybrid; the dsRNase activity is 10- 100-fold lower than RNase H activity. Complements the temperature-sensitive phenotype of an E.coli double rnhA/rnhB (RNase H) disruption mutant. In Sulfurisphaera tokodaii (strain DSM 16993 / JCM 10545 / NBRC 100140 / 7) (Sulfolobus tokodaii), this protein is Ribonuclease HI (rnhA).